The following is a 58-amino-acid chain: uncharacterized protein (58 aa).

The helical transmembrane segment at valine 12–phenylalanine 32 threads the bilayer.

It is found in the membrane. This is an uncharacterized protein from Saccharomyces cerevisiae (strain ATCC 204508 / S288c) (Baker's yeast).